The sequence spans 1154 residues: Nitric oxide synthase, inducible (1154 aa).

A disordered region spans residues 22 to 58; sequence KDINNNVEKPPGATPSPSTQDDLKNHKHHNDSPQPLT. The DINNN-motif; mediates interaction with SPSB1, SPSB2 and SPSB4 motif lies at 23–27; sequence DINNN. Residues cysteine 107 and cysteine 112 each contribute to the Zn(2+) site. A heme b-binding site is contributed by cysteine 197. Residues glutamine 260, tryptophan 369, tyrosine 370, and glutamate 374 each contribute to the L-arginine site. Positions 378, 459, 460, and 473 each coordinate (6R)-L-erythro-5,6,7,8-tetrahydrobiopterin. Residue tyrosine 488 participates in heme b binding. Positions 512–532 are calmodulin-binding; it reads LKVLVKAVLFASMLMRKTMAS. The Flavodoxin-like domain occupies 536–674; sequence VTILFATETG…AFRCWAVQTF (139 aa). Residues threonine 542, glutamate 543, threonine 544, lysine 546, and serine 547 each contribute to the FMN site. At tyrosine 572 the chain carries Phosphotyrosine. Residues serine 588, threonine 589, serine 625, cysteine 632, and glutamate 658 each contribute to the FMN site. The FAD-binding FR-type domain maps to 727-967; that stretch reads KNVFTLRLKS…VRSAGNFKLP (241 aa). Position 747 (arginine 747) interacts with NADP(+). Positions 769, 903, 905, 906, 921, 923, 927, 940, 941, and 942 each coordinate FAD. Residues threonine 981, arginine 1014, serine 1043, arginine 1044, lysine 1050, tyrosine 1052, glutamine 1054, and aspartate 1087 each contribute to the NADP(+) site.

Belongs to the NOS family. In terms of assembly, homodimer. Interacts with NHERF1. Interacts with GAPDH; induced by oxidatively-modified low-densitity lipoprotein (LDL(ox)). Interacts with S100A8 and S100A9 to form the iNOS-S100A8/9 transnitrosylase complex. Interacts with SPSB1, SPSB2 and SPSB4. Interacts with ELOC and CUL5 in the presence of SPSB1 or SPSB2 or SPSB4. Forms a complex with ASL, ASS1 and HSP90AA1; the complex regulates cell-autonomous L-arginine synthesis and citrulline recycling while channeling extracellular L-arginine to nitric oxide synthesis pathway. Heme b serves as cofactor. FAD is required as a cofactor. Requires FMN as cofactor. It depends on (6R)-L-erythro-5,6,7,8-tetrahydrobiopterin as a cofactor. In terms of processing, polyubiquitinated; mediated by SPSB1, SPSB2 and SPSB4, leading to proteasomal degradation.

It is found in the cytoplasm. The protein resides in the cytosol. The catalysed reaction is 2 L-arginine + 3 NADPH + 4 O2 + H(+) = 2 L-citrulline + 2 nitric oxide + 3 NADP(+) + 4 H2O. With respect to regulation, regulated by calcium/calmodulin. Its function is as follows. Produces nitric oxide (NO) which is a messenger molecule with diverse functions throughout the body. In macrophages, NO mediates tumoricidal and bactericidal actions. Also has nitrosylase activity and mediates cysteine S-nitrosylation of cytoplasmic target proteins such PTGS2/COX2. As component of the iNOS-S100A8/9 transnitrosylase complex involved in the selective inflammatory stimulus-dependent S-nitrosylation of GAPDH implicated in regulation of the GAIT complex activity and probably multiple targets including ANXA5, EZR, MSN and VIM. Involved in inflammation, enhances the synthesis of pro-inflammatory mediators such as IL6 and IL8. This chain is Nitric oxide synthase, inducible (NOS2), found in Canis lupus familiaris (Dog).